The primary structure comprises 43 residues: Protein PsbN (43 aa).

The chain crosses the membrane as a helical span at residues 7-27 (ITIFLSCFLVGVTGYALYTAF).

Belongs to the PsbN family.

It localises to the plastid. Its subcellular location is the chloroplast thylakoid membrane. Its function is as follows. May play a role in photosystem I and II biogenesis. This Klebsormidium bilatum (Filamentous green alga) protein is Protein PsbN.